Here is a 60-residue protein sequence, read N- to C-terminus: UPF0434 protein ETA_21370 (60 aa).

It belongs to the UPF0434 family.

In Erwinia tasmaniensis (strain DSM 17950 / CFBP 7177 / CIP 109463 / NCPPB 4357 / Et1/99), this protein is UPF0434 protein ETA_21370.